A 384-amino-acid chain; its full sequence is tRNA-specific 2-thiouridylase MnmA (384 aa).

ATP is bound by residues 29 to 36 (AMSGGVDS) and Leu-55. The active-site Nucleophile is the Cys-123. Cys-123 and Cys-220 form a disulfide bridge. Gly-147 is a binding site for ATP. The segment at 169 to 171 (RDQ) is interaction with tRNA. Residue Cys-220 is the Cysteine persulfide intermediate of the active site.

This sequence belongs to the MnmA/TRMU family.

The protein resides in the cytoplasm. The catalysed reaction is S-sulfanyl-L-cysteinyl-[protein] + uridine(34) in tRNA + AH2 + ATP = 2-thiouridine(34) in tRNA + L-cysteinyl-[protein] + A + AMP + diphosphate + H(+). Functionally, catalyzes the 2-thiolation of uridine at the wobble position (U34) of tRNA, leading to the formation of s(2)U34. In Dinoroseobacter shibae (strain DSM 16493 / NCIMB 14021 / DFL 12), this protein is tRNA-specific 2-thiouridylase MnmA.